The chain runs to 194 residues: Thymidine kinase (194 aa).

Residues 9 to 16 (GAMNSGKT) and 85 to 88 (DECQ) contribute to the ATP site. The active-site Proton acceptor is the E86. Zn(2+) contacts are provided by C143, C146, C180, and H183.

The protein belongs to the thymidine kinase family. Homotetramer.

The protein localises to the cytoplasm. It carries out the reaction thymidine + ATP = dTMP + ADP + H(+). The protein is Thymidine kinase of Enterococcus faecalis (strain ATCC 700802 / V583).